A 350-amino-acid chain; its full sequence is DNA polymerase IV (350 aa).

Positions 5–181 (IMHYDMDAFY…KKIKIIPGVG (177 aa)) constitute a UmuC domain. Mg(2+)-binding residues include aspartate 9 and aspartate 99. The active site involves glutamate 100.

The protein belongs to the DNA polymerase type-Y family. Monomer. The cofactor is Mg(2+).

Its subcellular location is the cytoplasm. The catalysed reaction is DNA(n) + a 2'-deoxyribonucleoside 5'-triphosphate = DNA(n+1) + diphosphate. In terms of biological role, poorly processive, error-prone DNA polymerase involved in untargeted mutagenesis. Copies undamaged DNA at stalled replication forks, which arise in vivo from mismatched or misaligned primer ends. These misaligned primers can be extended by PolIV. Exhibits no 3'-5' exonuclease (proofreading) activity. May be involved in translesional synthesis, in conjunction with the beta clamp from PolIII. The protein is DNA polymerase IV of Fusobacterium nucleatum subsp. nucleatum (strain ATCC 25586 / DSM 15643 / BCRC 10681 / CIP 101130 / JCM 8532 / KCTC 2640 / LMG 13131 / VPI 4355).